A 367-amino-acid polypeptide reads, in one-letter code: Alanine racemase (367 aa).

Lys40 serves as the catalytic Proton acceptor; specific for D-alanine. N6-(pyridoxal phosphate)lysine is present on Lys40. Arg136 provides a ligand contact to substrate. Tyr263 serves as the catalytic Proton acceptor; specific for L-alanine. Met310 contributes to the substrate binding site.

Belongs to the alanine racemase family. Pyridoxal 5'-phosphate is required as a cofactor.

The catalysed reaction is L-alanine = D-alanine. It participates in amino-acid biosynthesis; D-alanine biosynthesis; D-alanine from L-alanine: step 1/1. In terms of biological role, catalyzes the interconversion of L-alanine and D-alanine. May also act on other amino acids. The polypeptide is Alanine racemase (alr) (Streptococcus thermophilus (strain ATCC BAA-491 / LMD-9)).